A 344-amino-acid polypeptide reads, in one-letter code: MNRLTLALDVMGGDFGPRITIPALSLALEKNPMLSFVLFGDQSQCSPLLNSLPVTQQQRITFVHTSRIIEADIPFTQALRQSKGSSMRLALEAVARGEAQGCVSGGNTGALVGLAKLLIKPLPNIERPALTTLIPSMNGKSSVMLDLGANVEADSQLLCQFAEMGNIFAEVMLDLVHPRLALLNIGTEENKGNQIIRDTHQLLKQRYDLNYIGFIESDKLMNHFADVIICDGFSGNIALKALEGAAKNILSLLKKPTPDSHLCQTAKRYLLRAIFYRYYRKLQQINPDRHNGATLLGLSSVVVKSHGGAGVNAYFYAIDHAIGQIRSGIPDKISQGLNRLHQNL.

The protein belongs to the PlsX family. As to quaternary structure, homodimer. Probably interacts with PlsY.

Its subcellular location is the cytoplasm. It carries out the reaction a fatty acyl-[ACP] + phosphate = an acyl phosphate + holo-[ACP]. The protein operates within lipid metabolism; phospholipid metabolism. Catalyzes the reversible formation of acyl-phosphate (acyl-PO(4)) from acyl-[acyl-carrier-protein] (acyl-ACP). This enzyme utilizes acyl-ACP as fatty acyl donor, but not acyl-CoA. In Actinobacillus pleuropneumoniae serotype 5b (strain L20), this protein is Phosphate acyltransferase.